Here is a 178-residue protein sequence, read N- to C-terminus: Protein FLOWERING LOCUS T 1 (178 aa).

It belongs to the phosphatidylethanolamine-binding protein family. In terms of tissue distribution, expressed in leaves but not in shoot apex.

In terms of biological role, involved in the regulation of vernalization and of flowering time. The chain is Protein FLOWERING LOCUS T 1 from Brachypodium distachyon (Purple false brome).